The primary structure comprises 273 residues: Orotidine 5'-phosphate decarboxylase (273 aa).

K95 (proton donor) is an active-site residue.

This sequence belongs to the OMP decarboxylase family. Type 2 subfamily.

It carries out the reaction orotidine 5'-phosphate + H(+) = UMP + CO2. It functions in the pathway pyrimidine metabolism; UMP biosynthesis via de novo pathway; UMP from orotate: step 2/2. The chain is Orotidine 5'-phosphate decarboxylase from Bordetella bronchiseptica (strain ATCC BAA-588 / NCTC 13252 / RB50) (Alcaligenes bronchisepticus).